The sequence spans 129 residues: Small ribosomal subunit protein uS11 (129 aa).

Belongs to the universal ribosomal protein uS11 family. As to quaternary structure, part of the 30S ribosomal subunit. Interacts with proteins S7 and S18. Binds to IF-3.

Its function is as follows. Located on the platform of the 30S subunit, it bridges several disparate RNA helices of the 16S rRNA. Forms part of the Shine-Dalgarno cleft in the 70S ribosome. The polypeptide is Small ribosomal subunit protein uS11 (Methylocella silvestris (strain DSM 15510 / CIP 108128 / LMG 27833 / NCIMB 13906 / BL2)).